The primary structure comprises 337 residues: DNA-directed RNA polymerase subunit alpha (337 aa).

The interval methionine 1–glutamate 233 is alpha N-terminal domain (alpha-NTD). Positions phenylalanine 249–tyrosine 337 are alpha C-terminal domain (alpha-CTD).

This sequence belongs to the RNA polymerase alpha chain family. Homodimer. The RNAP catalytic core consists of 2 alpha, 1 beta, 1 beta' and 1 omega subunit. When a sigma factor is associated with the core the holoenzyme is formed, which can initiate transcription.

The enzyme catalyses RNA(n) + a ribonucleoside 5'-triphosphate = RNA(n+1) + diphosphate. Functionally, DNA-dependent RNA polymerase catalyzes the transcription of DNA into RNA using the four ribonucleoside triphosphates as substrates. This Brucella melitensis biotype 2 (strain ATCC 23457) protein is DNA-directed RNA polymerase subunit alpha.